Reading from the N-terminus, the 353-residue chain is DNA polymerase IV (353 aa).

In terms of domain architecture, UmuC spans 6–187 (IIHIDCDCFY…LPVTKLHGVG (182 aa)). Mg(2+) contacts are provided by Asp-10 and Asp-105. Residue Glu-106 is part of the active site.

Belongs to the DNA polymerase type-Y family. In terms of assembly, monomer. Mg(2+) serves as cofactor.

The protein resides in the cytoplasm. It carries out the reaction DNA(n) + a 2'-deoxyribonucleoside 5'-triphosphate = DNA(n+1) + diphosphate. In terms of biological role, poorly processive, error-prone DNA polymerase involved in untargeted mutagenesis. Copies undamaged DNA at stalled replication forks, which arise in vivo from mismatched or misaligned primer ends. These misaligned primers can be extended by PolIV. Exhibits no 3'-5' exonuclease (proofreading) activity. May be involved in translesional synthesis, in conjunction with the beta clamp from PolIII. This is DNA polymerase IV from Pseudomonas syringae pv. tomato (strain ATCC BAA-871 / DC3000).